Here is a 258-residue protein sequence, read N- to C-terminus: Thiazole synthase (258 aa).

K100 (schiff-base intermediate with DXP) is an active-site residue. Residues G161, A187–G188, and N209–T210 contribute to the 1-deoxy-D-xylulose 5-phosphate site.

Belongs to the ThiG family. As to quaternary structure, homotetramer. Forms heterodimers with either ThiH or ThiS.

It localises to the cytoplasm. The enzyme catalyses [ThiS sulfur-carrier protein]-C-terminal-Gly-aminoethanethioate + 2-iminoacetate + 1-deoxy-D-xylulose 5-phosphate = [ThiS sulfur-carrier protein]-C-terminal Gly-Gly + 2-[(2R,5Z)-2-carboxy-4-methylthiazol-5(2H)-ylidene]ethyl phosphate + 2 H2O + H(+). It participates in cofactor biosynthesis; thiamine diphosphate biosynthesis. Its function is as follows. Catalyzes the rearrangement of 1-deoxy-D-xylulose 5-phosphate (DXP) to produce the thiazole phosphate moiety of thiamine. Sulfur is provided by the thiocarboxylate moiety of the carrier protein ThiS. In vitro, sulfur can be provided by H(2)S. The chain is Thiazole synthase from Campylobacter jejuni subsp. jejuni serotype O:2 (strain ATCC 700819 / NCTC 11168).